Consider the following 402-residue polypeptide: Omega-3 fatty acid desaturase fat-1 (402 aa).

4 consecutive transmembrane segments (helical) span residues 79 to 99 (LVQD…FEYF), 101 to 121 (LFGY…LFVV), 235 to 255 (CVIS…IAGS), and 260 to 280 (FWYY…VTYL).

It belongs to the fatty acid desaturase type 1 family.

It is found in the membrane. The catalysed reaction is (9Z,12Z)-octadecadienoyl-CoA + 2 Fe(II)-[cytochrome b5] + O2 + 2 H(+) = (9Z,12Z,15Z)-octadecatrienoyl-CoA + 2 Fe(III)-[cytochrome b5] + 2 H2O. The enzyme catalyses (8Z,11Z,14Z)-eicosatrienoyl-CoA + 2 Fe(II)-[cytochrome b5] + O2 + 2 H(+) = (8Z,11Z,14Z,17Z)-eicosatetraenoyl-CoA + 2 Fe(III)-[cytochrome b5] + 2 H2O. It carries out the reaction (5Z,8Z,11Z,14Z)-eicosatetraenoyl-CoA + 2 Fe(II)-[cytochrome b5] + O2 + 2 H(+) = (5Z,8Z,11Z,14Z,17Z)-eicosapentaenoyl-CoA + 2 Fe(III)-[cytochrome b5] + 2 H2O. It catalyses the reaction (7Z,10Z,13Z,16Z)-docosatetraenoyl-CoA + 2 Fe(II)-[cytochrome b5] + O2 + 2 H(+) = (7Z,10Z,13Z,16Z,19Z)-docosapentaenoyl-CoA + 2 Fe(III)-[cytochrome b5] + 2 H2O. The catalysed reaction is (6Z,9Z,12Z)-octadecatrienoyl-CoA + 2 Fe(II)-[cytochrome b5] + O2 + 2 H(+) = (6Z,9Z,12Z,15Z)-octadecatetraenoyl-CoA + 2 Fe(III)-[cytochrome b5] + 2 H2O. Its pathway is lipid metabolism; polyunsaturated fatty acid biosynthesis. Omega-3 fatty acid desaturase that recognizes a range of 18- and 20-carbon omega-6 substrates. Introduces a double bond in the fatty acid chain three carbons away from terminal methyl group to biosynthesize n-3 (omega-3) polyunsaturated fatty acids (PUFAs) endogenously (PUFAs are essential for membrane structure and many cellular and physiological processes). Acts on a number of substrates like linoleoyl-CoA ((9Z,12Z)-octadecadienoyl-CoA, 18:2n-6), dihomo-gamma-linolenoyl-CoA ((8Z,11Z,14Z)-eicosatrienoyl-CoA, 20:3n-6), and arachidonoyl-CoA ((5Z,8Z,11Z,14Z)-eicosatetraenoyl-CoA, 20:4n-6), to generate alpha-linolenoyl-CoA ((9Z,12Z,15Z)-octadecatrienoyl-CoA, 18:3n-3), (8Z,11Z,14Z,17Z)-eicosatetraenoyl-CoA (20:4n-3) and (5Z,8Z,11Z,14Z,17Z)-eicosapentaenoyl-CoA (20:5n-3) respectively. Unlike plants, Caenorhabditis elegans desaturases seem to use fatty acyl-CoAs as substrates. The sequence is that of Omega-3 fatty acid desaturase fat-1 (fat-1) from Caenorhabditis elegans.